Here is a 124-residue protein sequence, read N- to C-terminus: Small ribosomal subunit protein eS25 (124 aa).

Over residues 1 to 22 (MPPKDSKQKKDAGKSKKDKDPV) the composition is skewed to basic and acidic residues. The disordered stretch occupies residues 1–37 (MPPKDSKQKKDAGKSKKDKDPVNKSGGKAKKKKWSKG). Positions 27-37 (GKAKKKKWSKG) are enriched in basic residues.

It belongs to the eukaryotic ribosomal protein eS25 family. As to quaternary structure, component of the small ribosomal subunit.

It localises to the cytoplasm. Its function is as follows. Component of the small ribosomal subunit. The ribosome is a large ribonucleoprotein complex responsible for the synthesis of proteins in the cell. The protein is Small ribosomal subunit protein eS25 (rps25) of Danio rerio (Zebrafish).